The sequence spans 481 residues: Thiol protease (481 aa).

A Calpain catalytic domain is found at 169-481 (DLREQALSST…ENFWYIAYMY (313 aa)). Catalysis depends on residues cysteine 229, histidine 406, and asparagine 426.

This sequence belongs to the peptidase C2 family.

Its activity is regulated as follows. Inactive below 20 degrees Celsius and pH 6.0. Inhibited by divalent cations. Thiol protease. Probably an important virulence factor. The chain is Thiol protease (tpr) from Porphyromonas gingivalis (strain ATCC BAA-308 / W83).